Consider the following 295-residue polypeptide: Elongation factor Ts (295 aa).

The involved in Mg(2+) ion dislocation from EF-Tu stretch occupies residues 79 to 82 (TDFV).

It belongs to the EF-Ts family.

It is found in the cytoplasm. Associates with the EF-Tu.GDP complex and induces the exchange of GDP to GTP. It remains bound to the aminoacyl-tRNA.EF-Tu.GTP complex up to the GTP hydrolysis stage on the ribosome. In Bacillus cereus (strain ATCC 10987 / NRS 248), this protein is Elongation factor Ts.